We begin with the raw amino-acid sequence, 171 residues long: Methylated-DNA--protein-cysteine methyltransferase (171 aa).

C139 serves as the catalytic Nucleophile; methyl group acceptor.

Belongs to the MGMT family.

The protein localises to the cytoplasm. It carries out the reaction a 6-O-methyl-2'-deoxyguanosine in DNA + L-cysteinyl-[protein] = S-methyl-L-cysteinyl-[protein] + a 2'-deoxyguanosine in DNA. The enzyme catalyses a 4-O-methyl-thymidine in DNA + L-cysteinyl-[protein] = a thymidine in DNA + S-methyl-L-cysteinyl-[protein]. In terms of biological role, involved in the cellular defense against the biological effects of O6-methylguanine (O6-MeG) and O4-methylthymine (O4-MeT) in DNA. Repairs the methylated nucleobase in DNA by stoichiometrically transferring the methyl group to a cysteine residue in the enzyme. This is a suicide reaction: the enzyme is irreversibly inactivated. This is Methylated-DNA--protein-cysteine methyltransferase from Shigella flexneri.